Reading from the N-terminus, the 79-residue chain is uncharacterized protein (79 aa).

An N-terminal signal peptide occupies residues 1-18 (MQIKNIVAVLATVTAINA). Residues 24-44 (PNATTPNATQPNATQPNTTLP) are disordered. Asn-25, Asn-30, Asn-35, and Asn-40 each carry an N-linked (GlcNAc...) asparagine glycan. A lipid anchor (GPI-anchor amidated glycine) is attached at Gly-55. Positions 56 to 79 (EAVVNTMAAGAFGAAIAAGVAFLF) are cleaved as a propeptide — removed in mature form.

It is found in the cell membrane. This is an uncharacterized protein from Saccharomyces cerevisiae (strain ATCC 204508 / S288c) (Baker's yeast).